The primary structure comprises 428 residues: Serine--tRNA ligase (428 aa).

235-237 (TAE) is an L-serine binding site. Residue 266-268 (RSE) coordinates ATP. Residue Glu289 participates in L-serine binding. 353–356 (EISS) lines the ATP pocket. L-serine is bound at residue Ser389.

Belongs to the class-II aminoacyl-tRNA synthetase family. Type-1 seryl-tRNA synthetase subfamily. Homodimer. The tRNA molecule binds across the dimer.

It is found in the cytoplasm. It catalyses the reaction tRNA(Ser) + L-serine + ATP = L-seryl-tRNA(Ser) + AMP + diphosphate + H(+). It carries out the reaction tRNA(Sec) + L-serine + ATP = L-seryl-tRNA(Sec) + AMP + diphosphate + H(+). It participates in aminoacyl-tRNA biosynthesis; selenocysteinyl-tRNA(Sec) biosynthesis; L-seryl-tRNA(Sec) from L-serine and tRNA(Sec): step 1/1. Its function is as follows. Catalyzes the attachment of serine to tRNA(Ser). Is also able to aminoacylate tRNA(Sec) with serine, to form the misacylated tRNA L-seryl-tRNA(Sec), which will be further converted into selenocysteinyl-tRNA(Sec). This is Serine--tRNA ligase from Shewanella baltica (strain OS185).